A 327-amino-acid polypeptide reads, in one-letter code: Cyclic AMP-responsive element-binding protein 1 (327 aa).

Disordered stretches follow at residues 1-27 and 94-113; these read MTME…QMTV and SEDS…RREI. A KID domain is found at 87–146; the sequence is QISTIAESEDSQESVDSVTDSQKRREILSRRPSYRKILNDLSSDAPGVPRIEEEKSEEET. Phosphoserine; by CaMK1, CaMK2, CaMK4, PKB/AKT1 or PKB/AKT2, RPS6KA3, RPS6KA4, RPS6KA5 and SGK1 is present on S119. K122 participates in a covalent cross-link: Glycyl lysine isopeptide (Lys-Gly) (interchain with G-Cter in SUMO2). Residues 126–151 form a disordered region; sequence DLSSDAPGVPRIEEEKSEEETSAPAI. Phosphoserine; by CaMK2 is present on S128. A Phosphoserine; by HIPK2 modification is found at S257. In terms of domain architecture, bZIP spans 269-327; the sequence is ARKREVRLMKNREAARECRRKKKEYVKCLENRVAVLENQNKTLIEELKALKDLYCHKSD. The tract at residues 270-295 is basic motif; sequence RKREVRLMKNREAARECRRKKKEYVK. Residues K271 and K290 each participate in a glycyl lysine isopeptide (Lys-Gly) (interchain with G-Cter in SUMO1) cross-link. A leucine-zipper region spans residues 297–318; the sequence is LENRVAVLENQNKTLIEELKAL.

This sequence belongs to the bZIP family. In terms of assembly, interacts with PPRC1. Binds DNA as a dimer. This dimer is stabilized by magnesium ions. Interacts, through the bZIP domain, with the coactivators CRTC1/TORC1, CRTC2/TORC2 and CRTC3/TORC3. Interacts (phosphorylated form) with TOX3. When phosphorylated on Ser-119, binds CREBBP. Interacts with ARRB1. Binds to HIPK2. Interacts with SGK1. Interacts with CREBL2; regulates CREB1 phosphorylation, stability and transcriptional activity. Interacts with TSSK4; this interaction facilitates phosphorylation on Ser-119. Forms a complex with KMT2A and CREBBP. Interacts with TOX4; CREB1 is required for full induction of TOX4-dependent activity and the interaction is increased by cAMP and inhibited by insulin. Post-translationally, phosphorylation of Ser-119 allows CREBBP binding. Stimulated by phosphorylation. Phosphorylated Ser-128 can be detected in the suprachiasmatic nucleus (SCN), the amygdala, the cortex, and the hippocampus but not in the striatum nor in the cerebellum. In the SCN, phosphorylation of Ser-128 and Ser-119 are stimulated by light exposure and submitted to circadian oscillations. In the retina, only phosphorylation of Ser-119 can be detected upon light exposure. Phosphorylation of both Ser-119 and Ser-128 in the SCN regulates the activity of CREB and participates in circadian rhythm generation. Phosphorylated upon calcium influx by CaMK4 and CaMK2 on Ser-119. CaMK4 is much more potent than CAMK2 in activating CREB. Phosphorylated by CaMK2 on Ser-128. Phosphorylation of Ser-128 blocks CREB-mediated transcription even when Ser-119 is phosphorylated. Phosphorylated by CaMK1. Phosphorylation of Ser-271 by HIPK2 in response to genotoxic stress promotes CREB1 activity, facilitating the recruitment of the coactivator CBP. Phosphorylated at Ser-119 by RPS6KA3, RPS6KA4 and RPS6KA5 in response to mitogenic or stress stimuli. CREBL2 positively regulates phosphorylation at Ser-119 thereby stimulating CREB1 transcriptional activity. In liver, phosphorylation is induced by fasting or glucagon in a circadian fashion. Phosphorylated by TSSK4 on Ser-119. In terms of processing, sumoylated with SUMO1. Sumoylation on Lys-290, but not on Lys-271, is required for nuclear localization of this protein. Sumoylation is enhanced under hypoxia, promoting nuclear localization and stabilization. Expressed in the heart (at protein level).

The protein localises to the nucleus. In terms of biological role, phosphorylation-dependent transcription factor that stimulates transcription upon binding to the DNA cAMP response element (CRE), a sequence present in many viral and cellular promoters. Transcription activation is enhanced by the TORC coactivators which act independently of Ser-119 phosphorylation. Involved in different cellular processes including the synchronization of circadian rhythmicity and the differentiation of adipose cells. Regulates the expression of apoptotic and inflammatory response factors in cardiomyocytes in response to ERFE-mediated activation of AKT signaling. The polypeptide is Cyclic AMP-responsive element-binding protein 1 (Creb1) (Mus musculus (Mouse)).